The primary structure comprises 213 residues: uncharacterized protein (213 aa).

An N-terminal signal peptide occupies residues 1-19 (MKKVLLLLFVLTIGLALSA). C20 is lipidated: N-palmitoyl cysteine. C20 carries the S-diacylglycerol cysteine lipid modification. Residues 20 to 62 (CSQSSDASEKEKPKEKKSQEELEKELDKELKKGGEPKTKKDDQ) form a disordered region. Basic and acidic residues predominate over residues 26-62 (ASEKEKPKEKKSQEELEKELDKELKKGGEPKTKKDDQ).

It is found in the cell membrane. This is an uncharacterized protein from Bacillus subtilis (strain 168).